A 93-amino-acid chain; its full sequence is Large ribosomal subunit protein uL23cz/uL23cy (93 aa).

This sequence belongs to the universal ribosomal protein uL23 family. Part of the 50S ribosomal subunit.

Its subcellular location is the plastid. It localises to the chloroplast. In terms of biological role, binds to 23S rRNA. This chain is Large ribosomal subunit protein uL23cz/uL23cy (rpl23-A), found in Nymphaea alba (White water-lily).